A 904-amino-acid polypeptide reads, in one-letter code: ADQETNTSNVHNTQLASTSEENSVETEQITTFHDVETPNRINTPMAQDTSSARSMDDTHSIIQFLQRPVLIDHIEVIAGSTADDNKPLNRYVLNRQNPQPFVKSWTLPSVVLSAGGKGQKLANFKYLRCDVKVKIVLNANPFIAGRLYLAYSPYDDRVDPARSILNTSRAGVTGYPGIEIDFQLDNSVEMTIPYASFQEAYDLVTGTEDFVKLYLFTITPILSPTSTSASSKVDLSVYMWLDNISLVIPTYRVNTSIVPNVGTVVQTVQNMTTRDSETIRKAMVALRKNNKSTYDYIVQALSSAVPEVKNVTMQINSKKNNSNKMATPVKEKTKNIPKPKTENPKIGPISELATGVNKVANGIERIPVIGEMAKPVTSTIKWVADKIGSVAAIFGWSKPRNLEQVNLYQNVPGWGYSLYKGIDNSVPLAFDPNNELGDLRDVFPSGVDEMAIGYVCGNPAVKHVLSWNTTDKVQAPISNGDDWGGVIPVGMPCYSKIIRTTENDTTRTNTEIMDPAPCEYVCNMFSYWRATMCYRIAIVKTAFHTGRLGIFFGPGKIPITTTKDNISPDLTQLDGIKAPSDNNYKYILDLTNDTEITIRVPFVSNKMFMKSTGIYGGNSENNWDFSESFTGFLCIRPITKFMCPETVSNNVSIVVWKWAEDVVVVEPKPLLSGPTQVFQPPVTSADSINTIDASMQINLANKADENVVTFFDSDDAEERNMEALLKGSGEQIMNLRSLLRTFRTISENWNLPPNTKTAITDLTDVADKEGRDYMSYLSYIYRFYRGGRRYKFFNTTALKQSQTCYVRSFLIPRYYTADNTNNDGPSHITYPVLNPVHEVEVPYYCQYRKLPVASTTDKGYDASLMYYSNVGTNQIVARAGNDDFTFGWLIGTPQTQGITRTETK.

Disordered stretches follow at residues 1–27 (ADQETNTSNVHNTQLASTSEENSVETE), 35–54 (VETPNRINTPMAQDTSSARS), and 320–348 (NNSNKMATPVKEKTKNIPKPKTENPKIGP). Positions 39–53 (NRINTPMAQDTSSAR) are enriched in polar residues. Residues 329 to 343 (VKEKTKNIPKPKTEN) show a composition bias toward basic and acidic residues.

It belongs to the picornaviruses polyprotein family. In terms of processing, specific enzymatic cleavages in vivo yield mature proteins.

Its subcellular location is the virion. The protein resides in the host cytoplasm. Functionally, structural polyprotein: precursor of all the viral capsid proteins. Its function is as follows. Forms, together with protein VP2 and protein VP3, an icosahedral capsid protecting the viral RNA genome. The icosahedral capsid has a pseudo-T=3 symmetry with a diameter of approximately 300 Angstroms, and is composed of 60 copies of each capsid proteins. In terms of biological role, forms, together with protein VP1 and protein VP3, an icosahedral capsid protecting the viral RNA genome. The icosahedral capsid has a pseudo-T=3 symmetry with a diameter of approximately 300 Angstroms, and is composed of 60 copies of each capsid proteins. Forms, together with protein VP1 and protein VP2, an icosahedral capsid protecting the viral RNA genome. The icosahedral capsid has a pseudo-T=3 symmetry with a diameter of approximately 300 Angstroms, and is composed of 60 copies of each capsid proteins. The sequence is that of Structural polyprotein from Apis mellifera (Honeybee).